The chain runs to 180 residues: Bifunctional protein PyrR (180 aa).

The PRPP-binding motif lies at 101 to 113 (LIVVDDVLFTGRT).

Belongs to the purine/pyrimidine phosphoribosyltransferase family. PyrR subfamily. As to quaternary structure, homodimer and homohexamer; in equilibrium.

It carries out the reaction UMP + diphosphate = 5-phospho-alpha-D-ribose 1-diphosphate + uracil. Functionally, regulates transcriptional attenuation of the pyrimidine nucleotide (pyr) operon by binding in a uridine-dependent manner to specific sites on pyr mRNA. This disrupts an antiterminator hairpin in the RNA and favors formation of a downstream transcription terminator, leading to a reduced expression of downstream genes. In terms of biological role, also displays a weak uracil phosphoribosyltransferase activity which is not physiologically significant. The chain is Bifunctional protein PyrR from Bacillus pumilus (strain SAFR-032).